We begin with the raw amino-acid sequence, 593 residues long: RNA-binding protein 47 (593 aa).

The segment covering 1 to 20 (MTAEDSTAAMSSDSAAGSSA) has biased composition (low complexity). Residues 1 to 25 (MTAEDSTAAMSSDSAAGSSAKVPEG) are disordered. 3 RRM domains span residues 71 to 149 (CEVF…CSVD), 151 to 233 (CRLF…WAEP), and 246 to 318 (KILY…LAKP). Position 332 is an omega-N-methylarginine (arginine 332). An asymmetric dimethylarginine; alternate mark is found at arginine 394 and arginine 405. Arginine 394 and arginine 405 each carry omega-N-methylarginine; alternate.

It belongs to the RRM RBM47 family. Homodimer. Interacts with A1CF. Interacts with APOBEC1; form an mRNA editing complex. Interacts with RBPMS.

The protein resides in the nucleus. The protein localises to the cytoplasm. Single-stranded RNA-binding protein that functions in a variety of RNA processes, including alternative splicing, RNA stabilization, and RNA editing. Functions as an enzyme-substrate adapter for the cytidine deaminase APOBEC1. With APOBEC1 forms an mRNA editing complex involved into cytidine to uridine editing of a variety of mRNA molecules. Through the binding of their 3'UTR, also stabilizes a variety of mRNAs and regulates the expression of genes such as the interferon alpha/beta receptor and interleukin-10. Also involved in the alternative splicing of several genes including TJP1. Binds the pre-mRNA (U)GCAUG consensus sequences in downstream intronic regions of alternative exons, regulating their exclusion and inclusion into mRNAs. Independently of its RNA-binding activity, could negatively regulate MAVS by promoting its lysosomal degradation. This is RNA-binding protein 47 from Homo sapiens (Human).